A 1012-amino-acid chain; its full sequence is RAS protein activator like-3 (1012 aa).

Disordered regions lie at residues 1–128 (MDPP…TPDV), 147–196 (GNED…QIHN), and 208–229 (KKAK…ALGS). Polar residues predominate over residues 7–21 (SRASQTQPVAPSPLT). Phosphoserine is present on Ser18. The span at 27–39 (SGGGAEKGAGGFR) shows a compositional bias: gly residues. Residues 50–62 (QSHQETTASSQPA) show a composition bias toward polar residues. A Phosphoserine modification is found at Ser51. Acidic residues predominate over residues 100–113 (SEPEPENPEPEPEL). Residues Ser160, Ser162, Ser163, and Ser166 each carry the phosphoserine modification. Positions 160-171 (SASSESSIHVAS) are enriched in low complexity. The segment covering 175 to 186 (KDPDRTPGKTDP) has biased composition (basic and acidic residues). Residues 193–294 (QIHNVRGLLK…WIEDLRRHFQ (102 aa)) form the PH domain. Residues Ser212, Ser225, Ser229, and Ser232 each carry the phosphoserine modification. Thr235 bears the Phosphothreonine mark. The region spanning 285–405 (WIEDLRRHFQ…APAAGLERWF (121 aa)) is the C2 domain. A Ras-GAP domain is found at 475–683 (GRAQALVTDL…PAMQHFLDQV (209 aa)). Positions 752-887 (PAPRTQGHSS…DKDQALGTHR (136 aa)) are disordered. Residues Ser788 and Ser791 each carry the phosphoserine modification. Residues 826-841 (PARRRPSAGPRPRPKG) are compositionally biased toward basic residues. The stretch at 889 to 989 (VGKLAELQCE…KDTIQNLQLL (101 aa)) forms a coiled coil. The segment covering 990-999 (PRTSESQSQP) has biased composition (polar residues). Residues 990 to 1012 (PRTSESQSQPVPLKAPCINGDTT) are disordered.

Its subcellular location is the cytoplasm. It localises to the cell cortex. Functionally, functions as a Ras GTPase-activating protein. Plays an important role in the expansion and functions of natural killer T (NKT) cells in the liver by negatively regulating RAS activity and the down-stream ERK signaling pathway. The polypeptide is RAS protein activator like-3 (RASAL3) (Bos taurus (Bovine)).